Consider the following 179-residue polypeptide: Large ribosomal subunit protein uL5 (179 aa).

Belongs to the universal ribosomal protein uL5 family. Part of the 50S ribosomal subunit; part of the 5S rRNA/L5/L18/L25 subcomplex. Contacts the 5S rRNA and the P site tRNA. Forms a bridge to the 30S subunit in the 70S ribosome.

In terms of biological role, this is one of the proteins that bind and probably mediate the attachment of the 5S RNA into the large ribosomal subunit, where it forms part of the central protuberance. In the 70S ribosome it contacts protein S13 of the 30S subunit (bridge B1b), connecting the 2 subunits; this bridge is implicated in subunit movement. Contacts the P site tRNA; the 5S rRNA and some of its associated proteins might help stabilize positioning of ribosome-bound tRNAs. This is Large ribosomal subunit protein uL5 from Anoxybacillus flavithermus (strain DSM 21510 / WK1).